We begin with the raw amino-acid sequence, 240 residues long: Ribose-5-phosphate isomerase A (240 aa).

Substrate-binding positions include 41 to 44, 94 to 97, and 107 to 110; these read TGST, DGAD, and KGGG. E116 (proton acceptor) is an active-site residue. Residue K134 coordinates substrate.

The protein belongs to the ribose 5-phosphate isomerase family. Homodimer.

It carries out the reaction aldehydo-D-ribose 5-phosphate = D-ribulose 5-phosphate. It functions in the pathway carbohydrate degradation; pentose phosphate pathway; D-ribose 5-phosphate from D-ribulose 5-phosphate (non-oxidative stage): step 1/1. In terms of biological role, catalyzes the reversible conversion of ribose-5-phosphate to ribulose 5-phosphate. This Polaromonas sp. (strain JS666 / ATCC BAA-500) protein is Ribose-5-phosphate isomerase A.